The chain runs to 510 residues: Cytochrome P450 703A2 (510 aa).

Residues 2–22 (ILVLASLFAVLILNVLLWRWL) traverse the membrane as a helical segment. Residue C451 coordinates heme.

The protein belongs to the cytochrome P450 family. Heme serves as cofactor.

The protein resides in the membrane. It carries out the reaction dodecanoate + reduced [NADPH--hemoprotein reductase] + O2 = 7-hydroxydodecanoate + oxidized [NADPH--hemoprotein reductase] + H2O + H(+). In terms of biological role, involved in pollen wall development. Catalyzes the conversion of medium-chain saturated fatty acids to the corresponding monohydroxylated fatty acids, with a preferential hydroxylation of lauric acid at the C-7 position. In-chain hydroxylated fatty acids, together with omega-hydroxylated fatty acids, are key monomeric aliphatic building blocks for sporopollenin synthesis during exine formation. This chain is Cytochrome P450 703A2, found in Arabidopsis thaliana (Mouse-ear cress).